A 338-amino-acid chain; its full sequence is DNA-directed RNA polymerase subunit alpha (338 aa).

Positions 1–225 (MLISQRPTIT…ELFGLARELN (225 aa)) are alpha N-terminal domain (alpha-NTD). An alpha C-terminal domain (alpha-CTD) region spans residues 240 to 338 (TEYIAAYSMP…YIDVEAEDSE (99 aa)). The interval 319 to 338 (LEGYDAETGGYIDVEAEDSE) is disordered.

It belongs to the RNA polymerase alpha chain family. In terms of assembly, homodimer. The RNAP catalytic core consists of 2 alpha, 1 beta, 1 beta' and 1 omega subunit. When a sigma factor is associated with the core the holoenzyme is formed, which can initiate transcription.

It carries out the reaction RNA(n) + a ribonucleoside 5'-triphosphate = RNA(n+1) + diphosphate. In terms of biological role, DNA-dependent RNA polymerase catalyzes the transcription of DNA into RNA using the four ribonucleoside triphosphates as substrates. This Corynebacterium glutamicum (strain R) protein is DNA-directed RNA polymerase subunit alpha.